We begin with the raw amino-acid sequence, 398 residues long: Ribosomal RNA large subunit methyltransferase I (398 aa).

The PUA domain occupies 2–79; that stretch reads SVRLVLAKGR…LSESIDIAFF (78 aa).

This sequence belongs to the methyltransferase superfamily. RlmI family.

It localises to the cytoplasm. The enzyme catalyses cytidine(1962) in 23S rRNA + S-adenosyl-L-methionine = 5-methylcytidine(1962) in 23S rRNA + S-adenosyl-L-homocysteine + H(+). Functionally, specifically methylates the cytosine at position 1962 (m5C1962) of 23S rRNA. The protein is Ribosomal RNA large subunit methyltransferase I of Shigella dysenteriae serotype 1 (strain Sd197).